Here is a 288-residue protein sequence, read N- to C-terminus: CBY1-interacting BAR domain-containing protein 2 (288 aa).

Positions 6–217 (SRDSQVRVME…ESYDLEKDLE (212 aa)) are BAR-like. 2 disordered regions span residues 133-157 (QKSP…VDAS) and 256-288 (TIRS…RLNQ). Residues 138–157 (DRQTISQAETSVQRASVDAS) are compositionally biased toward polar residues. Over residues 266–276 (SEDDSAEEDPV) the composition is skewed to acidic residues.

The protein belongs to the CIBAR family. In terms of assembly, homodimer (via BAR-like domain). Heterodimer (via BAR-like domain) with FAM92A. Interacts with CBY1.

Its subcellular location is the cytoplasm. It localises to the cytoskeleton. The protein localises to the microtubule organizing center. It is found in the centrosome. The protein resides in the centriole. Its subcellular location is the cilium basal body. Its function is as follows. May play a role in ciliogenesis. In cooperation with CBY1 may facilitate ciliogenesis likely by the recruitment and fusion of endosomal vesicles at distal appendages during early stages of ciliogenesis. This is CBY1-interacting BAR domain-containing protein 2 (CIBAR2) from Bos taurus (Bovine).